Reading from the N-terminus, the 122-residue chain is Large ribosomal subunit protein uL14 (122 aa).

It belongs to the universal ribosomal protein uL14 family. In terms of assembly, part of the 50S ribosomal subunit. Forms a cluster with proteins L3 and L19. In the 70S ribosome, L14 and L19 interact and together make contacts with the 16S rRNA in bridges B5 and B8.

In terms of biological role, binds to 23S rRNA. Forms part of two intersubunit bridges in the 70S ribosome. The protein is Large ribosomal subunit protein uL14 of Chlorobium luteolum (strain DSM 273 / BCRC 81028 / 2530) (Pelodictyon luteolum).